A 338-amino-acid chain; its full sequence is Lipoate-protein ligase A (338 aa).

One can recognise a BPL/LPL catalytic domain in the interval 29-216; sequence PATQRVLFLW…AFFAHYGERV (188 aa). Residues R71, 76 to 79, and K134 contribute to the ATP site; that span reads GAVF. Residue K134 coordinates (R)-lipoate.

Belongs to the LplA family. As to quaternary structure, monomer.

Its subcellular location is the cytoplasm. It catalyses the reaction L-lysyl-[lipoyl-carrier protein] + (R)-lipoate + ATP = N(6)-[(R)-lipoyl]-L-lysyl-[lipoyl-carrier protein] + AMP + diphosphate + H(+). Its pathway is protein modification; protein lipoylation via exogenous pathway; protein N(6)-(lipoyl)lysine from lipoate: step 1/2. The protein operates within protein modification; protein lipoylation via exogenous pathway; protein N(6)-(lipoyl)lysine from lipoate: step 2/2. In terms of biological role, catalyzes both the ATP-dependent activation of exogenously supplied lipoate to lipoyl-AMP and the transfer of the activated lipoyl onto the lipoyl domains of lipoate-dependent enzymes. This chain is Lipoate-protein ligase A, found in Escherichia coli O8 (strain IAI1).